The following is a 438-amino-acid chain: MFDLPTVAPIDMEDSWVTFQAEGEQGQDSFSSSVNLDDSLTSLQWLQEFSILNANVGKAPSSGDSHGYKHLFGAPCSPLAADPACLGMPHTPGKPISSSTSRASHLGLQPMEDIDYKTNPHVKPPYSYATLICMAMQASKKTKITLSAIYKWITDNFCYFRHADPTWQNSIRHNLSLNKCFIKVPREKDEPGKGGFWKIDPQYADRLMNGAMKKRRLPPVQIHPAFASAQAAASGNSNRGSPWQLSVNSESHQLLKEFEEATGEQGWNALGEHGWNAISDGKSHKRKQPLPKRMFKAPRLSSSPMLCQEEQTELGSLKGDFDWEVIFDSSMNGVNFSAFEDLEVTPPLSPVTRSVDLTVHGKHIDCPQQWYPLGQDQAVVQNSLDFDETFLATSFLQHPWEENRNDYLSNSANIEQLFDLNEEFPAELNDWSALGSYI.

The segment at residues 123-217 (KPPYSYATLI…MNGAMKKRRL (95 aa)) is a DNA-binding region (fork-head).

This sequence belongs to the FOXJ1 family.

It is found in the nucleus. Its function is as follows. Key transcription factor required for motile ciliogenesis. Activates genes essential for motile cilia formation and function. This Xenopus tropicalis (Western clawed frog) protein is Forkhead box protein J1.